A 346-amino-acid chain; its full sequence is Tryptophan--tRNA ligase (346 aa).

ATP contacts are provided by residues 11–13 (RPT) and 19–20 (GH). Positions 12 to 20 (PTGKLHLGH) match the 'HIGH' region motif. Residue Asp143 coordinates L-tryptophan. ATP contacts are provided by residues 155-157 (GKD), Leu193, and 201-205 (KMSKS). A 'KMSKS' region motif is present at residues 201-205 (KMSKS).

It belongs to the class-I aminoacyl-tRNA synthetase family. Homodimer.

Its subcellular location is the cytoplasm. It catalyses the reaction tRNA(Trp) + L-tryptophan + ATP = L-tryptophyl-tRNA(Trp) + AMP + diphosphate + H(+). In terms of biological role, catalyzes the attachment of tryptophan to tRNA(Trp). The sequence is that of Tryptophan--tRNA ligase from Chlamydia muridarum (strain MoPn / Nigg).